Consider the following 794-residue polypeptide: PAN2-PAN3 deadenylation complex subunit PAN3 (794 aa).

Residues 7-36 (SAKDVLCKNILIYGYCKFQDKGCAFSHNKQ) form a C3H1-type zinc finger. Disordered stretches follow at residues 40–97 (PQQQ…TQSK) and 187–226 (AQVG…QQQL). Polar residues-rich tracts occupy residues 83-94 (IQSNGMVNSQET) and 189-199 (VGNNPGSTAPA). A compositionally biased stretch (low complexity) spans 200–226 (NLQLQQKQPQQPQQPQQPQQHQQQQQL). The tract at residues 372 to 668 (QTMQHLSLPD…MDQFILQYIS (297 aa)) is pseudokinase domain. Residues Arg-425 and 494-501 (DYYPNLTT) each bind ATP. The stretch at 669-707 (SHFMTLMNKLQNSHDWVELQLSTELENARLFRLMTKINF) forms a coiled coil. The tract at residues 708 to 794 (IISEMPTYDL…IDTQFRLLRG (87 aa)) is knob domain.

It belongs to the protein kinase superfamily. PAN3 family. As to quaternary structure, homodimer. Forms a heterotrimer with a catalytic subunit PAN2 to form the poly(A)-nuclease (PAN) deadenylation complex. Interacts (via PAM-2 motif) with poly(A)-binding protein PAB1 (via PABC domain), conferring substrate specificity of the enzyme complex.

It localises to the cytoplasm. Functionally, regulatory subunit of the poly(A)-nuclease (PAN) deadenylation complex, one of two cytoplasmic mRNA deadenylases involved in mRNA turnover. PAN specifically shortens poly(A) tails of RNA and the activity is stimulated by poly(A)-binding protein PAB1. PAN deadenylation is followed by rapid degradation of the shortened mRNA tails by the CCR4-NOT complex. Deadenylated mRNAs are then degraded by two alternative mechanisms, namely exosome-mediated 3'-5' exonucleolytic degradation, or deadenylation-dependent mRNA decaping and subsequent 5'-3' exonucleolytic degradation by XRN1. May also be involved in post-transcriptional maturation of mRNA poly(A) tails. PAN3 acts as a positive regulator for PAN activity, recruiting the catalytic subunit PAN2 to mRNA via its interaction with RNA and with PAB1. This chain is PAN2-PAN3 deadenylation complex subunit PAN3, found in Lodderomyces elongisporus (strain ATCC 11503 / CBS 2605 / JCM 1781 / NBRC 1676 / NRRL YB-4239) (Yeast).